The chain runs to 738 residues: 1,4-alpha-glucan branching enzyme GlgB (738 aa).

The active-site Nucleophile is Asp399. Glu452 functions as the Proton donor in the catalytic mechanism.

It belongs to the glycosyl hydrolase 13 family. GlgB subfamily. Monomer.

The catalysed reaction is Transfers a segment of a (1-&gt;4)-alpha-D-glucan chain to a primary hydroxy group in a similar glucan chain.. Its pathway is glycan biosynthesis; glycogen biosynthesis. Its function is as follows. Catalyzes the formation of the alpha-1,6-glucosidic linkages in glycogen by scission of a 1,4-alpha-linked oligosaccharide from growing alpha-1,4-glucan chains and the subsequent attachment of the oligosaccharide to the alpha-1,6 position. This chain is 1,4-alpha-glucan branching enzyme GlgB, found in Chlamydia trachomatis serovar L2 (strain ATCC VR-902B / DSM 19102 / 434/Bu).